The primary structure comprises 253 residues: Ribosomal RNA small subunit methyltransferase A (253 aa).

S-adenosyl-L-methionine-binding residues include H12, L14, G39, E60, D81, and N104.

This sequence belongs to the class I-like SAM-binding methyltransferase superfamily. rRNA adenine N(6)-methyltransferase family. RsmA subfamily.

It is found in the cytoplasm. The catalysed reaction is adenosine(1518)/adenosine(1519) in 16S rRNA + 4 S-adenosyl-L-methionine = N(6)-dimethyladenosine(1518)/N(6)-dimethyladenosine(1519) in 16S rRNA + 4 S-adenosyl-L-homocysteine + 4 H(+). In terms of biological role, specifically dimethylates two adjacent adenosines (A1518 and A1519) in the loop of a conserved hairpin near the 3'-end of 16S rRNA in the 30S particle. May play a critical role in biogenesis of 30S subunits. This Acidovorax ebreus (strain TPSY) (Diaphorobacter sp. (strain TPSY)) protein is Ribosomal RNA small subunit methyltransferase A.